The following is a 337-amino-acid chain: Protein-methionine-sulfoxide reductase catalytic subunit MsrP (337 aa).

The tat-type signal signal peptide spans Met1 to Ala54. Mo-molybdopterin-binding positions include Asn94, Tyr97–Glu98, Cys152, Thr187, Asn237, Arg242, and Ser253–Lys255.

It belongs to the MsrP family. As to quaternary structure, heterodimer of a catalytic subunit (MsrP) and a heme-binding subunit (MsrQ). It depends on Mo-molybdopterin as a cofactor. Post-translationally, predicted to be exported by the Tat system. The position of the signal peptide cleavage has not been experimentally proven.

It is found in the periplasm. The enzyme catalyses L-methionyl-[protein] + a quinone + H2O = L-methionyl-(S)-S-oxide-[protein] + a quinol. It catalyses the reaction L-methionyl-[protein] + a quinone + H2O = L-methionyl-(R)-S-oxide-[protein] + a quinol. Functionally, part of the MsrPQ system that repairs oxidized periplasmic proteins containing methionine sulfoxide residues (Met-O), using respiratory chain electrons. Thus protects these proteins from oxidative-stress damage caused by reactive species of oxygen and chlorine generated by the host defense mechanisms. MsrPQ is essential for the maintenance of envelope integrity under bleach stress, rescuing a wide series of structurally unrelated periplasmic proteins from methionine oxidation. The catalytic subunit MsrP is non-stereospecific, being able to reduce both (R-) and (S-) diastereoisomers of methionine sulfoxide. In Pseudomonas putida (strain ATCC 47054 / DSM 6125 / CFBP 8728 / NCIMB 11950 / KT2440), this protein is Protein-methionine-sulfoxide reductase catalytic subunit MsrP.